Consider the following 237-residue polypeptide: 2,3,4,5-tetrahydropyridine-2,6-dicarboxylate N-acetyltransferase (237 aa).

Belongs to the transferase hexapeptide repeat family. DapH subfamily.

The catalysed reaction is (S)-2,3,4,5-tetrahydrodipicolinate + acetyl-CoA + H2O = L-2-acetamido-6-oxoheptanedioate + CoA. It functions in the pathway amino-acid biosynthesis; L-lysine biosynthesis via DAP pathway; LL-2,6-diaminopimelate from (S)-tetrahydrodipicolinate (acetylase route): step 1/3. Catalyzes the transfer of an acetyl group from acetyl-CoA to tetrahydrodipicolinate. This is 2,3,4,5-tetrahydropyridine-2,6-dicarboxylate N-acetyltransferase from Limosilactobacillus fermentum (strain NBRC 3956 / LMG 18251) (Lactobacillus fermentum).